A 294-amino-acid polypeptide reads, in one-letter code: MHPRFQTAFAQLADNLQSALAPILADHHFPAMLTAEQVSTLKNTAGLDEDALAFALLPLAAACARTDLSHFNVGAIARGVSGNWYFGANMEFLGATMQQTVHAEQSAISHAWLRGEKGLAAVTVNYTPCGHCRQFMNELNSGLDLRIHLPGRAPHTLRDYLPDAFGPKDLEIKTLLMDEQDHGFTLTGDTLTQAAITAANKSHMPYSHSPSGVALECKDGRIFTGSYAENAAFNPTLPPLQGALNLLSLNGYDYADIQRAILAEKGDAALIQWDATAATLKALGCHNIDRVLLG.

2 consecutive CMP/dCMP-type deaminase domains span residues 48-168 (DEDA…FGPK) and 186-294 (LTGD…VLLG). Position 89–91 (89–91 (NME)) interacts with substrate. H102 contributes to the Zn(2+) binding site. The active-site Proton donor is the E104. Residues C129 and C132 each contribute to the Zn(2+) site.

It belongs to the cytidine and deoxycytidylate deaminase family. In terms of assembly, homodimer. Requires Zn(2+) as cofactor.

It catalyses the reaction cytidine + H2O + H(+) = uridine + NH4(+). The enzyme catalyses 2'-deoxycytidine + H2O + H(+) = 2'-deoxyuridine + NH4(+). This enzyme scavenges exogenous and endogenous cytidine and 2'-deoxycytidine for UMP synthesis. In Salmonella enteritidis PT4 (strain P125109), this protein is Cytidine deaminase.